Here is a 67-residue protein sequence, read N- to C-terminus: MLTHVKFKRLKINAGFTESLNGHLCVKISEKEYRDSSIKEVNPPIVRADPNMKVWVDSYQVKKWWQL.

This is an uncharacterized protein from Escherichia coli (Bacteriophage T4).